A 117-amino-acid polypeptide reads, in one-letter code: uncharacterized protein (117 aa).

Helical transmembrane passes span 32–52 (VSSS…VTVV), 56–76 (VGVA…VTLL), and 87–107 (LSWC…SFFF).

It is found in the membrane. This is an uncharacterized protein from Saccharomyces cerevisiae (strain ATCC 204508 / S288c) (Baker's yeast).